Consider the following 597-residue polypeptide: Elongation factor 4 (597 aa).

Positions 2 to 184 (KNIRNFSIIA…EVVNKIPPPK (183 aa)) constitute a tr-type G domain. Residues 14–19 (DHGKST) and 131–134 (NKID) contribute to the GTP site.

The protein belongs to the TRAFAC class translation factor GTPase superfamily. Classic translation factor GTPase family. LepA subfamily.

The protein resides in the cell inner membrane. It catalyses the reaction GTP + H2O = GDP + phosphate + H(+). Required for accurate and efficient protein synthesis under certain stress conditions. May act as a fidelity factor of the translation reaction, by catalyzing a one-codon backward translocation of tRNAs on improperly translocated ribosomes. Back-translocation proceeds from a post-translocation (POST) complex to a pre-translocation (PRE) complex, thus giving elongation factor G a second chance to translocate the tRNAs correctly. Binds to ribosomes in a GTP-dependent manner. The polypeptide is Elongation factor 4 (Chromobacterium violaceum (strain ATCC 12472 / DSM 30191 / JCM 1249 / CCUG 213 / NBRC 12614 / NCIMB 9131 / NCTC 9757 / MK)).